We begin with the raw amino-acid sequence, 283 residues long: ATP phosphoribosyltransferase (283 aa).

This sequence belongs to the ATP phosphoribosyltransferase family. Long subfamily. The cofactor is Mg(2+).

It localises to the cytoplasm. The enzyme catalyses 1-(5-phospho-beta-D-ribosyl)-ATP + diphosphate = 5-phospho-alpha-D-ribose 1-diphosphate + ATP. The protein operates within amino-acid biosynthesis; L-histidine biosynthesis; L-histidine from 5-phospho-alpha-D-ribose 1-diphosphate: step 1/9. With respect to regulation, feedback inhibited by histidine. In terms of biological role, catalyzes the condensation of ATP and 5-phosphoribose 1-diphosphate to form N'-(5'-phosphoribosyl)-ATP (PR-ATP). Has a crucial role in the pathway because the rate of histidine biosynthesis seems to be controlled primarily by regulation of HisG enzymatic activity. The protein is ATP phosphoribosyltransferase of Bacteroides thetaiotaomicron (strain ATCC 29148 / DSM 2079 / JCM 5827 / CCUG 10774 / NCTC 10582 / VPI-5482 / E50).